The primary structure comprises 205 residues: MIGKLKGVVDSFGEDFVILDVSGVGYIVHCSARTLQRMPKVGEPAELSIETHVREDMIRLYGFRSDAEREWFRLLQTVQGVGARVALGVLSVLEPEALASAIATGDKGSISRAPGVGPRLAARLAAELKDKAPAFAPVDPALVALAGAVEEGAAPQPVADAVSALVNLGYPQVQAAAAIAAALKGAGEGAEAKVLIRLGLRELAR.

The interval 1–64 (MIGKLKGVVD…EDMIRLYGFR (64 aa)) is domain I. Residues 65-143 (SDAEREWFRL…AFAPVDPALV (79 aa)) form a domain II region. The segment at 144–152 (ALAGAVEEG) is flexible linker. A domain III region spans residues 153–205 (AAPQPVADAVSALVNLGYPQVQAAAAIAAALKGAGEGAEAKVLIRLGLRELAR).

This sequence belongs to the RuvA family. In terms of assembly, homotetramer. Forms an RuvA(8)-RuvB(12)-Holliday junction (HJ) complex. HJ DNA is sandwiched between 2 RuvA tetramers; dsDNA enters through RuvA and exits via RuvB. An RuvB hexamer assembles on each DNA strand where it exits the tetramer. Each RuvB hexamer is contacted by two RuvA subunits (via domain III) on 2 adjacent RuvB subunits; this complex drives branch migration. In the full resolvosome a probable DNA-RuvA(4)-RuvB(12)-RuvC(2) complex forms which resolves the HJ.

Its subcellular location is the cytoplasm. Its function is as follows. The RuvA-RuvB-RuvC complex processes Holliday junction (HJ) DNA during genetic recombination and DNA repair, while the RuvA-RuvB complex plays an important role in the rescue of blocked DNA replication forks via replication fork reversal (RFR). RuvA specifically binds to HJ cruciform DNA, conferring on it an open structure. The RuvB hexamer acts as an ATP-dependent pump, pulling dsDNA into and through the RuvAB complex. HJ branch migration allows RuvC to scan DNA until it finds its consensus sequence, where it cleaves and resolves the cruciform DNA. In Methylobacterium radiotolerans (strain ATCC 27329 / DSM 1819 / JCM 2831 / NBRC 15690 / NCIMB 10815 / 0-1), this protein is Holliday junction branch migration complex subunit RuvA.